Here is a 142-residue protein sequence, read N- to C-terminus: Transcription antitermination protein NusB (142 aa).

Belongs to the NusB family.

In terms of biological role, involved in transcription antitermination. Required for transcription of ribosomal RNA (rRNA) genes. Binds specifically to the boxA antiterminator sequence of the ribosomal RNA (rrn) operons. The polypeptide is Transcription antitermination protein NusB (Roseiflexus castenholzii (strain DSM 13941 / HLO8)).